The chain runs to 242 residues: Large ribosomal subunit protein uL1 (242 aa).

The protein belongs to the universal ribosomal protein uL1 family. As to quaternary structure, part of the 50S ribosomal subunit.

In terms of biological role, binds directly to 23S rRNA. The L1 stalk is quite mobile in the ribosome, and is involved in E site tRNA release. Functionally, protein L1 is also a translational repressor protein, it controls the translation of the L11 operon by binding to its mRNA. The protein is Large ribosomal subunit protein uL1 of Persephonella marina (strain DSM 14350 / EX-H1).